A 503-amino-acid chain; its full sequence is Medium/long-chain-fatty-acid--CoA ligase FadD17 (503 aa).

It belongs to the ATP-dependent AMP-binding enzyme family.

It catalyses the reaction a medium-chain fatty acid + ATP + CoA = a medium-chain fatty acyl-CoA + AMP + diphosphate. The enzyme catalyses a long-chain fatty acid + ATP + CoA = a long-chain fatty acyl-CoA + AMP + diphosphate. It functions in the pathway lipid metabolism; fatty acid biosynthesis. Its function is as follows. Catalyzes the activation of medium/long-chain fatty acids as acyl-coenzyme A (acyl-CoA), which are then transferred to the multifunctional polyketide synthase (PKS) type III for further chain extension. In Mycobacterium marinum (strain ATCC BAA-535 / M), this protein is Medium/long-chain-fatty-acid--CoA ligase FadD17 (fadD17).